Consider the following 767-residue polypeptide: MGNGERGRPNKKMKYGGKDDQKMKNIQNAEDYYDDADEDSRDGEGEEKKRDFTKLELKPDHGNRPLWACADGRIFLETFSPLYKQAYDFLIAIAEPVCRPESMHEYNLTPHSLYAAVSVGLETETIISVLNKLSKTKLPKEMIEFIHASTANYGKVKLVLKKNRYFIESPFPEVLKRLLSDDVINRARFSSEPYYGGDGFSVGRTCGELEAGPGELLNEAEFAAAAEEKETHSFEIDPAQVENVKQRCLPNALNYPMLEEYDFRNDNVNPDLDMELKPHAQPRPYQEKSLSKMFGNGRARSGIIVLPCGAGKSLVGVSAAARIKKSCLCLATNAVSVDQWAFQFKLWSTIRDDQICRFTSDSKERFRGNAGVVVTTYNMVAFGGKRSEESEKIIEEMRNREWGLLLMDEVHVVPAHMFRKVISITKSHCKLGLTATLVREDERITDLNFLIGPKLYEANWLDLVKGGFIANVQCAEVWCPMTKEFFAEYLKKENSKKKQALYVMNPNKFRACEFLIRFHEQQRGDKIIVFADNLFALTEYAMKLRKPMIYGATSHIERTKILEAFKTSKDVNTVFLSKVGDNSIDIPEANVIIQISSHAGSRRQEAQRLGRILRAKGKLEDRMAGGKEEYNAFFYSLVSTDTQEMYYSTKRQQFLIDQGYSFKVITSLPPPDAGSSLSYHSQEEQLSLLGKVMNAGDDLVGLEQLEEDTDGMALQKARRSMGSMSVMSGSKGMVYMEYNSGRHKSGQQFKKPKDPTKRHNLFKKRYV.

The disordered stretch occupies residues 1–51; sequence MGNGERGRPNKKMKYGGKDDQKMKNIQNAEDYYDDADEDSRDGEGEEKKRD. Acidic residues predominate over residues 31–41; sequence DYYDDADEDSR. The span at 42 to 51 shows a compositional bias: basic and acidic residues; it reads DGEGEEKKRD. Positions 293-455 constitute a Helicase ATP-binding domain; sequence MFGNGRARSG…DLNFLIGPKL (163 aa). ATP is bound at residue 306–313; sequence LPCGAGKS. Residues 408–411 carry the DEVH box motif; it reads DEVH. The region spanning 510–676 is the Helicase C-terminal domain; the sequence is RACEFLIRFH…SLPPPDAGSS (167 aa). A disordered region spans residues 742 to 767; sequence RHKSGQQFKKPKDPTKRHNLFKKRYV. The Nuclear localization signal signature appears at 750 to 766; that stretch reads KKPKDPTKRHNLFKKRY. The span at 758–767 shows a compositional bias: basic residues; the sequence is RHNLFKKRYV.

The protein belongs to the helicase family. RAD25/XPB subfamily. As to quaternary structure, component of the 7-subunit TFIIH core complex composed of XPB, XPD, TFB1/GTF2H1, GTF2H2/P44, TFB4/GTF2H3, TFB2/GTF2H4 and TFB5/GTF2H5, which is active in NER. The core complex associates with the 3-subunit CDK-activating kinase (CAK) module composed of CYCH1/cyclin H1, CDKD and MAT1/At4g30820 to form the 10-subunit holoenzyme (holo-TFIIH) active in transcription. Expressed ubiquitously.

The protein resides in the nucleus. It carries out the reaction Couples ATP hydrolysis with the unwinding of duplex DNA by translocating in the 3'-5' direction.. It catalyses the reaction ATP + H2O = ADP + phosphate + H(+). In terms of biological role, ATP-dependent 3'-5' DNA helicase/translocase; binds dsDNA rather than ssDNA, unzipping it in a translocase rather than classical helicase activity. Component of the general transcription and DNA repair factor IIH (TFIIH) core complex. When complexed to CDK-activating kinase (CAK), involved in RNA transcription by RNA polymerase II. The ATPase activity of XPB/ERCC3, but not its helicase activity, is required for DNA opening; it may wrap around the damaged DNA wedging it open, causing localized melting and twisting that allows XPD/ERCC2 helicase to anchor. The ATP-dependent helicase activity of XPB/ERCC3 may be required for promoter escape. Also involved in transcription-coupled nucleotide excision repair (NER) of damaged DNA. In NER, TFIIH acts by opening DNA around the lesion to allow the excision of the damaged oligonucleotide and its replacement by a new DNA fragment. The structure of the TFIIH transcription complex differs from the NER-TFIIH complex. Partially complements UV sensitivity of a yeast SSL2 mutation. Required during the early stages of development, including seed germination. This chain is General transcription and DNA repair factor IIH helicase/translocase subunit XPB1 (XPB1), found in Arabidopsis thaliana (Mouse-ear cress).